Reading from the N-terminus, the 374-residue chain is Alcohol dehydrogenase S chain (374 aa).

An N-acetylserine modification is found at S2. Residues C47, H68, C98, C101, C104, C112, and C174 each coordinate Zn(2+). NAD(+)-binding positions include 199–204, D223, K228, 292–294, and R369; these read GLGGVG and VGV.

This sequence belongs to the zinc-containing alcohol dehydrogenase family. Class-I subfamily. In terms of assembly, dimer of identical or non-identical chains of two types (E and S) coded by 2 separate genes at different loci. The cofactor is Zn(2+).

The protein resides in the cytoplasm. The enzyme catalyses a primary alcohol + NAD(+) = an aldehyde + NADH + H(+). It carries out the reaction a secondary alcohol + NAD(+) = a ketone + NADH + H(+). The protein is Alcohol dehydrogenase S chain of Equus caballus (Horse).